The sequence spans 421 residues: Histidine--tRNA ligase (421 aa).

Belongs to the class-II aminoacyl-tRNA synthetase family. In terms of assembly, homodimer.

It localises to the cytoplasm. The catalysed reaction is tRNA(His) + L-histidine + ATP = L-histidyl-tRNA(His) + AMP + diphosphate + H(+). The sequence is that of Histidine--tRNA ligase from Nitrosomonas eutropha (strain DSM 101675 / C91 / Nm57).